A 413-amino-acid chain; its full sequence is MSYLIEQCKRLKEASYALGMISTKDKDEALRLIIDSIKRNKDDILAENDKDVLAAKEKGTKDSLIDRLKLTEDRIQGILEGIETIIGLKDPIWRSNDVWTLENGLTISKMTVPLGVIGIIYESRPNVTVDAFSLALKSGNCILLRGSSSAIHSNKMIVSAIKEGLRRSKVSEDIIELIEDTDRNVVKEMLTLNEYIDVIIPRGGADLIRFVVDHATVPTIETGIGNCHIYVDESANLENAIQIITNAKIQRPGVCNACETTLIHEDIAPKFLPMLAAALKDKVELKGCPRTREIIQAAEATDMDWAEEYLDYILAVKVVSNVDEAIGHIQAYGTKHSEAIITENYTNANYFLRRVDAAAVYVNASTRFTDGGAFGFGGEMGISTQKTHARGPMGLNELVTMKYTVVGNGQIRQ.

This sequence belongs to the gamma-glutamyl phosphate reductase family.

The protein resides in the cytoplasm. It catalyses the reaction L-glutamate 5-semialdehyde + phosphate + NADP(+) = L-glutamyl 5-phosphate + NADPH + H(+). It participates in amino-acid biosynthesis; L-proline biosynthesis; L-glutamate 5-semialdehyde from L-glutamate: step 2/2. Its function is as follows. Catalyzes the NADPH-dependent reduction of L-glutamate 5-phosphate into L-glutamate 5-semialdehyde and phosphate. The product spontaneously undergoes cyclization to form 1-pyrroline-5-carboxylate. The protein is Gamma-glutamyl phosphate reductase of Alkaliphilus oremlandii (strain OhILAs) (Clostridium oremlandii (strain OhILAs)).